The following is a 435-amino-acid chain: Bifunctional protein GlmU (435 aa).

The tract at residues 1 to 224 is pyrophosphorylase; sequence MNDTSIIILA…EQNFMGINDK (224 aa). Residues 9–12, Lys23, Gln75, and 82–83 contribute to the UDP-N-acetyl-alpha-D-glucosamine site; these read LAAG and GT. Asp103 is a Mg(2+) binding site. UDP-N-acetyl-alpha-D-glucosamine-binding residues include Gly136, Glu150, Asn165, and Asn222. Asn222 contacts Mg(2+). A linker region spans residues 225 to 245; sequence FQLSVAEKIMQDEIKQDLMKA. An N-acetyltransferase region spans residues 246–435; the sequence is GVLMRLPESI…KFFGKNNAEK (190 aa). Residues Arg309 and Lys326 each contribute to the UDP-N-acetyl-alpha-D-glucosamine site. His337 functions as the Proton acceptor in the catalytic mechanism. UDP-N-acetyl-alpha-D-glucosamine-binding residues include Tyr340 and Asn351. Acetyl-CoA is bound by residues 360–361, Ser379, Ala397, and Arg414; that span reads NY.

This sequence in the N-terminal section; belongs to the N-acetylglucosamine-1-phosphate uridyltransferase family. In the C-terminal section; belongs to the transferase hexapeptide repeat family. Homotrimer. The cofactor is Mg(2+).

The protein resides in the cytoplasm. The enzyme catalyses alpha-D-glucosamine 1-phosphate + acetyl-CoA = N-acetyl-alpha-D-glucosamine 1-phosphate + CoA + H(+). It carries out the reaction N-acetyl-alpha-D-glucosamine 1-phosphate + UTP + H(+) = UDP-N-acetyl-alpha-D-glucosamine + diphosphate. Its pathway is nucleotide-sugar biosynthesis; UDP-N-acetyl-alpha-D-glucosamine biosynthesis; N-acetyl-alpha-D-glucosamine 1-phosphate from alpha-D-glucosamine 6-phosphate (route II): step 2/2. It participates in nucleotide-sugar biosynthesis; UDP-N-acetyl-alpha-D-glucosamine biosynthesis; UDP-N-acetyl-alpha-D-glucosamine from N-acetyl-alpha-D-glucosamine 1-phosphate: step 1/1. The protein operates within bacterial outer membrane biogenesis; LPS lipid A biosynthesis. Catalyzes the last two sequential reactions in the de novo biosynthetic pathway for UDP-N-acetylglucosamine (UDP-GlcNAc). The C-terminal domain catalyzes the transfer of acetyl group from acetyl coenzyme A to glucosamine-1-phosphate (GlcN-1-P) to produce N-acetylglucosamine-1-phosphate (GlcNAc-1-P), which is converted into UDP-GlcNAc by the transfer of uridine 5-monophosphate (from uridine 5-triphosphate), a reaction catalyzed by the N-terminal domain. The chain is Bifunctional protein GlmU from Campylobacter curvus (strain 525.92).